Reading from the N-terminus, the 350-residue chain is Protein Wnt-2 (350 aa).

An N-terminal signal peptide occupies residues 1–25 (MNFLPNGICFYLSVAICWFSSRVDA). Cystine bridges form between C74–C85, C125–C133, C135–C155, C204–C218, C206–C213, C276–C307, C292–C302, C306–C346, C322–C337, C324–C334, and C329–C330. N132 carries N-linked (GlcNAc...) asparagine glycosylation. Residue S210 is the site of O-palmitoleoyl serine; by PORCN attachment. The N-linked (GlcNAc...) asparagine glycan is linked to N293.

This sequence belongs to the Wnt family. Palmitoleoylation is required for efficient binding to frizzled receptors. Depalmitoleoylation leads to Wnt signaling pathway inhibition.

The protein resides in the secreted. It localises to the extracellular space. The protein localises to the extracellular matrix. In terms of biological role, ligand for members of the frizzled family of seven transmembrane receptors. Functions in the canonical Wnt signaling pathway that results in activation of transcription factors of the TCF/LEF family. This Danio rerio (Zebrafish) protein is Protein Wnt-2 (wnt2).